Here is a 344-residue protein sequence, read N- to C-terminus: Putative replication factor C small subunit L499 (344 aa).

57–64 (GPSGSGKT) is a binding site for ATP.

This sequence belongs to the activator 1 small subunits family. RfcS subfamily.

In terms of biological role, part of the RFC clamp loader complex which loads the PCNA sliding clamp onto DNA. The chain is Putative replication factor C small subunit L499 from Acanthamoeba polyphaga mimivirus (APMV).